The sequence spans 79 residues: Cytoinsectotoxin-3 (79 aa).

Belongs to the cationic peptide 06 (cytoinsectotoxin) family. Expressed by the venom gland.

The protein resides in the secreted. Insecticidal and antimicrobial peptide. Has insecticidal activity against larvae of flesh fly S.carnaria. Has antibacterial activity against Gram-positive bacterium B.subtilis B-501 (MIC=0.63 uM) and Gram-negative bacterium E.coli DH5alpha (MIC=2.5 uM). The polypeptide is Cytoinsectotoxin-3 (Lachesana tarabaevi (Spider)).